Consider the following 223-residue polypeptide: Uracil-DNA glycosylase (223 aa).

The active-site Proton acceptor is the D67.

It belongs to the uracil-DNA glycosylase (UDG) superfamily. UNG family.

It localises to the cytoplasm. The enzyme catalyses Hydrolyzes single-stranded DNA or mismatched double-stranded DNA and polynucleotides, releasing free uracil.. Excises uracil residues from the DNA which can arise as a result of misincorporation of dUMP residues by DNA polymerase or due to deamination of cytosine. The chain is Uracil-DNA glycosylase from Borrelia hermsii (strain HS1 / DAH).